A 212-amino-acid chain; its full sequence is ATP phosphoribosyltransferase (212 aa).

Belongs to the ATP phosphoribosyltransferase family. Short subfamily. Heteromultimer composed of HisG and HisZ subunits.

It is found in the cytoplasm. It carries out the reaction 1-(5-phospho-beta-D-ribosyl)-ATP + diphosphate = 5-phospho-alpha-D-ribose 1-diphosphate + ATP. The protein operates within amino-acid biosynthesis; L-histidine biosynthesis; L-histidine from 5-phospho-alpha-D-ribose 1-diphosphate: step 1/9. Its function is as follows. Catalyzes the condensation of ATP and 5-phosphoribose 1-diphosphate to form N'-(5'-phosphoribosyl)-ATP (PR-ATP). Has a crucial role in the pathway because the rate of histidine biosynthesis seems to be controlled primarily by regulation of HisG enzymatic activity. The polypeptide is ATP phosphoribosyltransferase (Clostridium botulinum (strain ATCC 19397 / Type A)).